Reading from the N-terminus, the 368-residue chain is Homoserine O-acetyltransferase (368 aa).

In terms of domain architecture, AB hydrolase-1 spans 47 to 349; the sequence is NAILICHALS…SGEGHDSFLL (303 aa). Ser-153 (nucleophile) is an active-site residue. Arg-221 lines the substrate pocket. Residues Asp-311 and His-344 contribute to the active site. Substrate is bound at residue Asp-345.

The protein belongs to the AB hydrolase superfamily. MetX family. Homodimer.

The protein localises to the cytoplasm. The enzyme catalyses L-homoserine + acetyl-CoA = O-acetyl-L-homoserine + CoA. Its pathway is amino-acid biosynthesis; L-methionine biosynthesis via de novo pathway; O-acetyl-L-homoserine from L-homoserine: step 1/1. Transfers an acetyl group from acetyl-CoA to L-homoserine, forming acetyl-L-homoserine. In Leptospira borgpetersenii serovar Hardjo-bovis (strain JB197), this protein is Homoserine O-acetyltransferase.